The chain runs to 205 residues: Thymidylate kinase (205 aa).

11–18 (GLDKSGKT) lines the ATP pocket.

It belongs to the thymidylate kinase family. Homodimer; the dimer arrangement is orthogonal and not antiparallel as in human enzyme.

It carries out the reaction dTMP + ATP = dTDP + ADP. The protein operates within pyrimidine metabolism; dTTP biosynthesis. Its function is as follows. Poxvirus TMP kinase is able to phosphorylate dTMP, dUMP and also dGMP from any purine and pyrimidine nucleoside triphosphate. The large substrate specificity is explained by the presence of a canal connecting the edge of the dimer interface to the TMP base binding pocket, canal not found in the human homolog. This chain is Thymidylate kinase (OPG178), found in Homo sapiens (Human).